A 292-amino-acid polypeptide reads, in one-letter code: ATP synthase gamma chain (292 aa).

The protein belongs to the ATPase gamma chain family. In terms of assembly, F-type ATPases have 2 components, CF(1) - the catalytic core - and CF(0) - the membrane proton channel. CF(1) has five subunits: alpha(3), beta(3), gamma(1), delta(1), epsilon(1). CF(0) has three main subunits: a, b and c.

It localises to the cell inner membrane. Functionally, produces ATP from ADP in the presence of a proton gradient across the membrane. The gamma chain is believed to be important in regulating ATPase activity and the flow of protons through the CF(0) complex. The polypeptide is ATP synthase gamma chain (Bradyrhizobium sp. (strain ORS 278)).